The following is a 127-amino-acid chain: Calcitonin receptor-stimulating peptide 1 (127 aa).

Residues Met-1–Ala-25 form the signal peptide. Positions Ala-26–Gln-79 are excised as a propeptide. The cysteines at positions 83 and 88 are disulfide-linked.

Belongs to the calcitonin family.

It localises to the secreted. Stimulates cAMP production in porcine kidney cell line LLC-PK1 via the calcitonin receptor (CT) but not via the CT-like (CL) receptor. The sequence is that of Calcitonin receptor-stimulating peptide 1 (CRSP1) from Canis lupus familiaris (Dog).